Reading from the N-terminus, the 146-residue chain is Large ribosomal subunit protein uL15 (146 aa).

A disordered region spans residues Met-1 to Pro-65. A compositionally biased stretch (gly residues) spans Arg-24 to Ala-34.

Belongs to the universal ribosomal protein uL15 family. Part of the 50S ribosomal subunit.

Functionally, binds to the 23S rRNA. The chain is Large ribosomal subunit protein uL15 from Bordetella avium (strain 197N).